We begin with the raw amino-acid sequence, 305 residues long: Sulfate adenylyltransferase subunit 2 (305 aa).

Belongs to the PAPS reductase family. CysD subfamily. In terms of assembly, heterodimer composed of CysD, the smaller subunit, and CysN.

The catalysed reaction is sulfate + ATP + H(+) = adenosine 5'-phosphosulfate + diphosphate. The protein operates within sulfur metabolism; hydrogen sulfide biosynthesis; sulfite from sulfate: step 1/3. With CysN forms the ATP sulfurylase (ATPS) that catalyzes the adenylation of sulfate producing adenosine 5'-phosphosulfate (APS) and diphosphate, the first enzymatic step in sulfur assimilation pathway. APS synthesis involves the formation of a high-energy phosphoric-sulfuric acid anhydride bond driven by GTP hydrolysis by CysN coupled to ATP hydrolysis by CysD. This is Sulfate adenylyltransferase subunit 2 from Pseudomonas fluorescens (strain SBW25).